The chain runs to 943 residues: Isoleucine--tRNA ligase (943 aa).

The 'HIGH' region motif lies at 58 to 68; sequence PYANGNIHIGH. L-isoleucyl-5'-AMP is bound at residue Glu-567. A 'KMSKS' region motif is present at residues 608 to 612; sequence KMSKS. Residue Lys-611 participates in ATP binding. Zn(2+)-binding residues include Cys-906, Cys-909, Cys-926, and Cys-929.

This sequence belongs to the class-I aminoacyl-tRNA synthetase family. IleS type 1 subfamily. In terms of assembly, monomer. Zn(2+) serves as cofactor.

Its subcellular location is the cytoplasm. The enzyme catalyses tRNA(Ile) + L-isoleucine + ATP = L-isoleucyl-tRNA(Ile) + AMP + diphosphate. Catalyzes the attachment of isoleucine to tRNA(Ile). As IleRS can inadvertently accommodate and process structurally similar amino acids such as valine, to avoid such errors it has two additional distinct tRNA(Ile)-dependent editing activities. One activity is designated as 'pretransfer' editing and involves the hydrolysis of activated Val-AMP. The other activity is designated 'posttransfer' editing and involves deacylation of mischarged Val-tRNA(Ile). This is Isoleucine--tRNA ligase from Pseudomonas savastanoi pv. phaseolicola (strain 1448A / Race 6) (Pseudomonas syringae pv. phaseolicola (strain 1448A / Race 6)).